We begin with the raw amino-acid sequence, 141 residues long: ATP synthase epsilon chain (141 aa).

Belongs to the ATPase epsilon chain family. In terms of assembly, F-type ATPases have 2 components, CF(1) - the catalytic core - and CF(0) - the membrane proton channel. CF(1) has five subunits: alpha(3), beta(3), gamma(1), delta(1), epsilon(1). CF(0) has three main subunits: a, b and c.

It localises to the cell inner membrane. Produces ATP from ADP in the presence of a proton gradient across the membrane. The sequence is that of ATP synthase epsilon chain from Burkholderia cenocepacia (strain ATCC BAA-245 / DSM 16553 / LMG 16656 / NCTC 13227 / J2315 / CF5610) (Burkholderia cepacia (strain J2315)).